Here is a 478-residue protein sequence, read N- to C-terminus: MNVQPTKYHGLVLDLMPNIRLMQGFGHFLFRYVNGPVLIRKLYSWWNLIMILLQYFAIMGNLVMNTGDVNELTANTITTLFFTHSVTKFIYVAVNSEHFYRTLGIWNQPNSHSLFAESDARYHSIALAKMRKLLVMVMVTTVLSVVAWITITFFGDSVKNVFDKETNETYTVEIPRLPIKAWYPWDAMSGVPYFFSFIYQAYFLLFSMCQANLADVMFCSWLLFTCEQLQHLKGIMRPLMELSATLDTYRPNSAALFRVASAGSKSELILNEEKDPDTKDFDLNGIYNSKADWGAQFRAPSTLQTFGDNGINGNPNGLTKKQELMVRSAIKYWVERHKHVVRLVSAIGETYGAALLLHMLTSTIKLTLLAYQATKIDALNVYGLTVIGYLVYALAQVFLFCIFGNRLIEESSSVMEAAYSCHWYDGSEEAKTFVQIVCQQCQKAMTISGAKFFTVSLDLFASVLGAVVTYFMVLVQLK.

Over 1-43 (MNVQPTKYHGLVLDLMPNIRLMQGFGHFLFRYVNGPVLIRKLY) the chain is Cytoplasmic. The helical transmembrane segment at 44 to 64 (SWWNLIMILLQYFAIMGNLVM) threads the bilayer. Residues 65-73 (NTGDVNELT) are Extracellular-facing. Residues 74 to 94 (ANTITTLFFTHSVTKFIYVAV) form a helical membrane-spanning segment. The Cytoplasmic portion of the chain corresponds to 95–133 (NSEHFYRTLGIWNQPNSHSLFAESDARYHSIALAKMRKL). Residues 134-154 (LVMVMVTTVLSVVAWITITFF) form a helical membrane-spanning segment. Residues 155–187 (GDSVKNVFDKETNETYTVEIPRLPIKAWYPWDA) lie on the Extracellular side of the membrane. An N-linked (GlcNAc...) asparagine glycan is attached at asparagine 167. Residues 188 to 208 (MSGVPYFFSFIYQAYFLLFSM) traverse the membrane as a helical segment. Residues 209-343 (CQANLADVMF…VERHKHVVRL (135 aa)) are Cytoplasmic-facing. The chain crosses the membrane as a helical span at residues 344–364 (VSAIGETYGAALLLHMLTSTI). The Extracellular segment spans residues 365 to 382 (KLTLLAYQATKIDALNVY). Residues 383–403 (GLTVIGYLVYALAQVFLFCIF) traverse the membrane as a helical segment. The Cytoplasmic segment spans residues 404 to 454 (GNRLIEESSSVMEAAYSCHWYDGSEEAKTFVQIVCQQCQKAMTISGAKFFT). Residues 455-475 (VSLDLFASVLGAVVTYFMVLV) form a helical membrane-spanning segment. Topologically, residues 476–478 (QLK) are extracellular.

It belongs to the insect chemoreceptor superfamily. Heteromeric odorant receptor channel (TC 1.A.69) family. Orco subfamily. In terms of assembly, heterodimer with conventional odorant receptors (ORs). Complexes exist early in the endomembrane system in olfactory sensory neurons (OSNs), coupling these complexes to the conserved ciliary trafficking pathway. As to expression, found specifically within most antennal and maxillary palp sensilla, as well as in a subset of proboscis sensilla.

It localises to the cell membrane. In terms of biological role, odorant coreceptor which complexes with conventional odorant receptors (ORs) to form odorant-sensing units, providing sensitive and prolonged odorant signaling and calcium permeability. Orco is a universal and integral part of the functional odorant receptor, involved in the dendritic localization of other olfactory receptors. Plays a key role in preferred attraction of females for humans over non-human hosts for blood feeding. Human attraction plays a crucial role in the transmission of dengue and yellow fever by the mosquito. Also required for the response to the insect repellent IR3535; or to N,N-Diethyl-meta-toluamide (DEET), the most widely used insect repellent worldwide. This Aedes aegypti (Yellowfever mosquito) protein is Odorant receptor coreceptor (SGPRor7).